Here is a 393-residue protein sequence, read N- to C-terminus: NADH-quinone oxidoreductase subunit D (393 aa).

This sequence belongs to the complex I 49 kDa subunit family. NDH-1 is composed of 14 different subunits. Subunits NuoB, C, D, E, F, and G constitute the peripheral sector of the complex.

Its subcellular location is the cell inner membrane. The enzyme catalyses a quinone + NADH + 5 H(+)(in) = a quinol + NAD(+) + 4 H(+)(out). Its function is as follows. NDH-1 shuttles electrons from NADH, via FMN and iron-sulfur (Fe-S) centers, to quinones in the respiratory chain. The immediate electron acceptor for the enzyme in this species is believed to be ubiquinone. Couples the redox reaction to proton translocation (for every two electrons transferred, four hydrogen ions are translocated across the cytoplasmic membrane), and thus conserves the redox energy in a proton gradient. This chain is NADH-quinone oxidoreductase subunit D, found in Ehrlichia ruminantium (strain Welgevonden).